We begin with the raw amino-acid sequence, 684 residues long: DNA ligase (684 aa).

NAD(+) contacts are provided by residues 34–38, 83–84, and Glu117; these read DYDFD and SL. The N6-AMP-lysine intermediate role is filled by Lys119. Residues Arg140, Glu188, Lys301, and Lys325 each coordinate NAD(+). Residues Cys419, Cys422, Cys437, and Cys443 each coordinate Zn(2+). Positions 602-684 constitute a BRCT domain; the sequence is DAPQTFAGMT…QTMLAAESGD (83 aa).

It belongs to the NAD-dependent DNA ligase family. LigA subfamily. The cofactor is Mg(2+). Mn(2+) serves as cofactor.

It carries out the reaction NAD(+) + (deoxyribonucleotide)n-3'-hydroxyl + 5'-phospho-(deoxyribonucleotide)m = (deoxyribonucleotide)n+m + AMP + beta-nicotinamide D-nucleotide.. DNA ligase that catalyzes the formation of phosphodiester linkages between 5'-phosphoryl and 3'-hydroxyl groups in double-stranded DNA using NAD as a coenzyme and as the energy source for the reaction. It is essential for DNA replication and repair of damaged DNA. This Chloroherpeton thalassium (strain ATCC 35110 / GB-78) protein is DNA ligase.